A 182-amino-acid polypeptide reads, in one-letter code: Adenine phosphoribosyltransferase (182 aa).

This sequence belongs to the purine/pyrimidine phosphoribosyltransferase family. Homodimer.

The protein resides in the cytoplasm. The enzyme catalyses AMP + diphosphate = 5-phospho-alpha-D-ribose 1-diphosphate + adenine. Its pathway is purine metabolism; AMP biosynthesis via salvage pathway; AMP from adenine: step 1/1. In terms of biological role, catalyzes a salvage reaction resulting in the formation of AMP, that is energically less costly than de novo synthesis. The polypeptide is Adenine phosphoribosyltransferase (Streptomyces avermitilis (strain ATCC 31267 / DSM 46492 / JCM 5070 / NBRC 14893 / NCIMB 12804 / NRRL 8165 / MA-4680)).